Consider the following 168-residue polypeptide: DAZ-associated protein 2 (168 aa).

Residues 1 to 13 (MNSKGQYPTQPTY) show a composition bias toward low complexity. The disordered stretch occupies residues 1–25 (MNSKGQYPTQPTYPVQPPGNPVYPQ). Positions 39–42 (PPAY) match the PPAY motif. At S77 the chain carries Phosphoserine.

As to quaternary structure, interacts with SOX6. Interacts with DAZ1 and DAZL. Interacts with IL17RB. May interact with FAM168B. Interacts with INCA1. Interacts with EIF4G1 and EIF4G2. Interacts (via PPAY motif) with NEDD4 (via WW domains). Interacts with transcription factor TCF4; the interaction results in localization of DAZAP2 to the nucleus. Interacts with transcription factors TCF7 and TCF7L1. Interacts with transcription factor LEF1. Interacts with serine/threonine-protein kinase HIPK2; the interaction results in phosphorylation of DAZAP2 which causes localization of DAZAP2 to the nucleus, reduces interaction of DAZAP2 with HIPK2 and prevents DAZAP2-dependent degradation of HIPK2. Interacts with ubiquitin ligase SIAH1; the interaction is decreased following phosphorylation of DAZAP2 by HIPK2. Interacts with TP53; the interaction is triggered by DNA damage. Post-translationally, ubiquitinated by SMURF2, leading to proteasomal degradation. Ubiquitinated by NEDD4, leading to proteasomal degradation. Following DNA damage, phosphorylated by HIPK2 which promotes DAZAP2 localization to the nucleus, reduces interaction of DAZAP2 with HIPK2 and SIAH1, and prevents DAZAP2-dependent ubiquitination of HIPK2 by E3 ubiquitin-protein ligase SIAH1 and subsequent HIPK2 proteasomal degradation.

The protein resides in the cytoplasm. The protein localises to the nucleus. Its subcellular location is the nucleus speckle. It is found in the nuclear body. It localises to the stress granule. Its function is as follows. In unstressed cells, promotes SIAH1-mediated polyubiquitination and degradation of the serine/threonine-protein kinase HIPK2, probably by acting as a loading factor that potentiates complex formation between HIPK2 and ubiquitin ligase SIAH1. In response to DNA damage, localizes to the nucleus following phosphorylation by HIPK2 and modulates the expression of a subset of TP53/p53 target genes by binding to TP53 at target gene promoters. This limits the expression of a number of cell death-mediating TP53 target genes, reducing DNA damage-induced cell death. Enhances the binding of transcription factor TCF7L2/TCF4, a Wnt signaling pathway effector, to the promoters of target genes. Plays a role in stress granule formation. This Bos taurus (Bovine) protein is DAZ-associated protein 2.